A 611-amino-acid polypeptide reads, in one-letter code: tRNA uridine 5-carboxymethylaminomethyl modification enzyme MnmG (611 aa).

12–17 (GGGHSG) contacts FAD. Residue 271–285 (GPRYCPSIEEKVYRF) participates in NAD(+) binding.

This sequence belongs to the MnmG family. In terms of assembly, homodimer. Heterotetramer of two MnmE and two MnmG subunits. Requires FAD as cofactor.

The protein resides in the cytoplasm. NAD-binding protein involved in the addition of a carboxymethylaminomethyl (cmnm) group at the wobble position (U34) of certain tRNAs, forming tRNA-cmnm(5)s(2)U34. The sequence is that of tRNA uridine 5-carboxymethylaminomethyl modification enzyme MnmG from Karelsulcia muelleri (strain GWSS) (Sulcia muelleri).